The chain runs to 446 residues: Dual specificity mitogen-activated protein kinase kinase 2 (446 aa).

The span at 27–42 (SSGSSAGLGFQGQSQQ) shows a compositional bias: low complexity. The tract at residues 27–51 (SSGSSAGLGFQGQSQQHSTVNSMQG) is disordered. The region spanning 149–414 (LKDLGEIGRG…YKELLKHPFI (266 aa)) is the Protein kinase domain. Residues 155–163 (IGRGAYGSV) and lysine 178 each bind ATP. Catalysis depends on aspartate 276, which acts as the Proton acceptor. Serine 304 carries the phosphoserine; by RAF modification. Threonine 308 carries the post-translational modification Phosphothreonine; by RAF.

Belongs to the protein kinase superfamily. STE Ser/Thr protein kinase family. MAP kinase kinase subfamily. MAPKK is itself dependent on Ser/Thr phosphorylation for activity catalyzed by MAP kinase kinase kinases. Expressed abundantly in the adult brain and muscle.

It carries out the reaction L-seryl-[protein] + ATP = O-phospho-L-seryl-[protein] + ADP + H(+). The enzyme catalyses L-threonyl-[protein] + ATP = O-phospho-L-threonyl-[protein] + ADP + H(+). It catalyses the reaction L-tyrosyl-[protein] + ATP = O-phospho-L-tyrosyl-[protein] + ADP + H(+). Catalyzes the concomitant phosphorylation of a threonine and a tyrosine residue in a Thr-Glu-Tyr sequence located in MAP kinases. The chain is Dual specificity mitogen-activated protein kinase kinase 2 (map2k2) from Xenopus laevis (African clawed frog).